An 890-amino-acid chain; its full sequence is Potassium/sodium hyperpolarization-activated cyclic nucleotide-gated channel 1 (890 aa).

A disordered region spans residues 1-93; sequence MEGGGKPNSS…AEGPRRQYGF (93 aa). The Cytoplasmic portion of the chain corresponds to 1–142; it reads MEGGGKPNSS…WIIHPYSDFR (142 aa). Residues 8–34 are compositionally biased toward low complexity; it reads NSSSNSRDDGNSVFPAKASATGAGPAA. Gly residues predominate over residues 62-77; it reads DGGGGGGGGGGGGEEP. Residues 143 to 164 traverse the membrane as a helical segment; that stretch reads FYWDLIMLIMMVGNLVIIPVGI. The Extracellular portion of the chain corresponds to 165-173; sequence TFFTEQTTT. Residues 174–194 traverse the membrane as a helical segment; it reads PWIIFNVASDTVFLLDLIMNF. Topologically, residues 195–215 are cytoplasmic; that stretch reads RTGTVNEDSSEIILDPKVIKM. The helical transmembrane segment at 216-236 threads the bilayer; that stretch reads NYLKSWFVVDFISSIPVDYIF. At 237–260 the chain is on the extracellular side; it reads LIVEKGMDSEVYKTARALRIVRFT. The chain crosses the membrane as a helical; Voltage-sensor span at residues 261–281; it reads KILSLLRLLRLSRLIRYIHQW. The Cytoplasmic segment spans residues 282–295; sequence EEIFHMTYDLASAV. A helical transmembrane segment spans residues 296 to 318; that stretch reads VRIFNLIGMMLLLCHWDGCLQFL. Residues 319–344 are Extracellular-facing; it reads VPLLQDFPPDCWVSLNEMVNDSWGKQ. A glycan (N-linked (GlcNAc...) asparagine) is linked at N338. Residues 345–366 constitute an intramembrane region (pore-forming); that stretch reads YSYALFKAMSHMLCIGYGAQAP. A Selectivity filter motif is present at residues 358–362; it reads CIGYG. Topologically, residues 367 to 371 are extracellular; it reads VSMSD. The helical transmembrane segment at 372–392 threads the bilayer; it reads LWITMLSMIVGATCYAMFVGH. Over 393–890 the chain is Cytoplasmic; it reads ATALIQSLDS…AEKPRFASNL (498 aa). Residues G539, E540, C542, R549, T550, R590, and R593 each contribute to the 3',5'-cyclic AMP site. 2 stretches are compositionally biased toward low complexity: residues 644–691 and 731–749; these read MTTL…PQPS and QQQP…TQPQ. Disordered regions lie at residues 644-692, 725-796, and 845-890; these read MTTL…QPSA, SQLS…LPHE, and MSSG…ASNL. Residues 770 to 780 show a composition bias toward polar residues; it reads STQALHNTNLT. Over residues 854–865 the composition is skewed to pro residues; that stretch reads RGVPPAPPPPAA. Positions 880–890 are enriched in basic and acidic residues; that stretch reads DAEKPRFASNL.

The protein belongs to the potassium channel HCN family. As to quaternary structure, homotetramer. Heterotetramer with HCN2. The potassium channel is composed of a homo- or heterotetrameric complex of pore-forming subunits. Interacts with KCNE2. Interacts with the SH3 domain of CSK. As to expression, detected in brain, in particular in amygdala and hippocampus, while expression in caudate nucleus, corpus callosum, substantia nigra, subthalamic nucleus and thalamus is very low or not detectable. Detected at very low levels in muscle and pancreas.

Its subcellular location is the cell membrane. It catalyses the reaction Na(+)(in) = Na(+)(out). The catalysed reaction is K(+)(in) = K(+)(out). Its activity is regulated as follows. Activated by cAMP, and at 10-100 times higher concentrations, also by cGMP. cAMP binding promotes tetramerization and formation of an active channel. Compared to other family members, cAMP has less stimulatory effect on HCN1 because part of the molecules already contain bound cAMP and form homotetramers when cAMP levels are low, this inherent tetramerization in HCN1 results in a weaker response to increased cAMP. Inhibited by Cs(1+), zatebradine, capsazepine and ZD7288. Functionally, hyperpolarization-activated ion channel that are permeable to sodium and potassium ions. Displays lower selectivity for K(+) over Na(+) ions. Contributes to the native pacemaker currents in heart (If) and in the generation of the I(h) current which controls neuron excitability. Participates in cerebellar mechanisms of motor learning. May mediate responses to sour stimuli. This chain is Potassium/sodium hyperpolarization-activated cyclic nucleotide-gated channel 1 (HCN1), found in Homo sapiens (Human).